A 434-amino-acid chain; its full sequence is RHOMBOID-like protein 9, chloroplastic (434 aa).

The transit peptide at 1–68 directs the protein to the chloroplast; sequence MALFPLHHEV…SPRRRLCLVR (68 aa). Transmembrane regions (helical) follow at residues 182-202, 209-229, 238-258, 267-287, 289-309, 326-346, 352-372, and 399-419; these read FYAVSILASINVGVCLFEAAA, MGLLSLPLLYGAKINDLILAG, MFLHSGIPHVALSSWALLTFG, LFTFCLIYILGGVSGNFMSFL, TADPTVGGTGPAFALIGAWLV, LFQKAIIMTGFGLILSHFGPI, LGALIAGIVYGFFTCPVLQLG, and FLLFTIFVAVIVTSLLLIGDG.

Belongs to the peptidase S54 family.

Its subcellular location is the plastid. It localises to the chloroplast membrane. In terms of biological role, probable rhomboid-type serine protease that catalyzes intramembrane proteolysis. The sequence is that of RHOMBOID-like protein 9, chloroplastic from Arabidopsis thaliana (Mouse-ear cress).